The following is a 57-amino-acid chain: Three-finger toxin Tschuditoxin-I (57 aa).

3 cysteine pairs are disulfide-bonded: Cys-3/Cys-22, Cys-17/Cys-39, and Cys-41/Cys-52.

In terms of tissue distribution, expressed by the venom gland.

It is found in the secreted. Functionally, produces peripheral paralysis by blocking neuromuscular transmission at the postsynaptic site. Binds to and inhibits the endogenous nicotinic acetylcholine receptors (nAChR). This neurotoxin is lethal to mice by intraperitoneal or intravenous injection. This is Three-finger toxin Tschuditoxin-I from Micrurus tschudii (Desert coral snake).